Reading from the N-terminus, the 347-residue chain is D-alanine--D-alanine ligase (347 aa).

The 199-residue stretch at 134 to 332 folds into the ATP-grasp domain; it reads KLYAKDLGIK…LAQSLPKTPK (199 aa). 161–216 contributes to the ATP binding site; that stretch reads LINFNFPFIIKPNSAGSSLGVSVVKEEKELNYALDSAFEYSKEVLIEPFIQGVKEY. 3 residues coordinate Mg(2+): D288, E300, and N302.

The protein belongs to the D-alanine--D-alanine ligase family. The cofactor is Mg(2+). Requires Mn(2+) as cofactor.

The protein localises to the cytoplasm. It catalyses the reaction 2 D-alanine + ATP = D-alanyl-D-alanine + ADP + phosphate + H(+). Its pathway is cell wall biogenesis; peptidoglycan biosynthesis. Functionally, cell wall formation. This chain is D-alanine--D-alanine ligase, found in Helicobacter pylori (strain HPAG1).